A 542-amino-acid chain; its full sequence is Chaperonin GroEL 3 (542 aa).

ATP is bound by residues 29 to 32 (TLGP), 86 to 90 (DGTTT), glycine 413, 477 to 479 (NAA), and aspartate 493.

The protein belongs to the chaperonin (HSP60) family. Forms a cylinder of 14 subunits composed of two heptameric rings stacked back-to-back. Interacts with the co-chaperonin GroES.

It is found in the cytoplasm. The enzyme catalyses ATP + H2O + a folded polypeptide = ADP + phosphate + an unfolded polypeptide.. Together with its co-chaperonin GroES, plays an essential role in assisting protein folding. The GroEL-GroES system forms a nano-cage that allows encapsulation of the non-native substrate proteins and provides a physical environment optimized to promote and accelerate protein folding. This is Chaperonin GroEL 3 from Frankia alni (strain DSM 45986 / CECT 9034 / ACN14a).